A 392-amino-acid polypeptide reads, in one-letter code: Methylthioribose-1-phosphate isomerase (392 aa).

Asp-267 serves as the catalytic Proton donor.

Belongs to the eIF-2B alpha/beta/delta subunits family. MtnA subfamily.

The protein localises to the cytoplasm. It localises to the nucleus. It catalyses the reaction 5-(methylsulfanyl)-alpha-D-ribose 1-phosphate = 5-(methylsulfanyl)-D-ribulose 1-phosphate. Its pathway is amino-acid biosynthesis; L-methionine biosynthesis via salvage pathway; L-methionine from S-methyl-5-thio-alpha-D-ribose 1-phosphate: step 1/6. Catalyzes the interconversion of methylthioribose-1-phosphate (MTR-1-P) into methylthioribulose-1-phosphate (MTRu-1-P). The chain is Methylthioribose-1-phosphate isomerase from Blastomyces gilchristii (strain SLH14081) (Blastomyces dermatitidis).